Reading from the N-terminus, the 179-residue chain is UPF0227 protein Shewana3_2292 (179 aa).

This sequence belongs to the UPF0227 family.

In Shewanella sp. (strain ANA-3), this protein is UPF0227 protein Shewana3_2292.